Here is a 194-residue protein sequence, read N- to C-terminus: dCTP deaminase (194 aa).

DCTP contacts are provided by residues Arg-110–Arg-115, Asp-128, Val-136–Glu-138, Tyr-171, Lys-178, and Gln-182. The Proton donor/acceptor role is filled by Glu-138.

The protein belongs to the dCTP deaminase family. In terms of assembly, homotrimer.

It catalyses the reaction dCTP + H2O + H(+) = dUTP + NH4(+). The protein operates within pyrimidine metabolism; dUMP biosynthesis; dUMP from dCTP (dUTP route): step 1/2. In terms of biological role, catalyzes the deamination of dCTP to dUTP. In Psychromonas ingrahamii (strain DSM 17664 / CCUG 51855 / 37), this protein is dCTP deaminase.